The chain runs to 171 residues: Co-chaperone protein HscB (171 aa).

One can recognise a J domain in the interval 2 to 74 (DYFTLFGLPA…LTRAEYLLSL (73 aa)).

The protein belongs to the HscB family. As to quaternary structure, interacts with HscA and stimulates its ATPase activity. Interacts with IscU.

Its function is as follows. Co-chaperone involved in the maturation of iron-sulfur cluster-containing proteins. Seems to help targeting proteins to be folded toward HscA. In Salmonella arizonae (strain ATCC BAA-731 / CDC346-86 / RSK2980), this protein is Co-chaperone protein HscB.